The following is a 220-amino-acid chain: Grancalcin (220 aa).

4 EF-hand domains span residues 51 to 86 (SPADDSMWTYFTAVAGQDGEVDAEELQRCLTQSGIS), 92 to 127 (FSLETCRIMIAMLDRDYTGKMGFNEFKELWAALNAW), 122 to 157 (AALNAWKQNFMTIDQDQSGTVEHHELSQAIALMGYR), and 158 to 193 (LSPQTLAAIVRRYSKNGRIFFDDYVACCVKLRALTD). Residues Asp-105, Asp-107, Thr-109, Lys-111, Glu-116, Asp-135, Asp-137, Ser-139, Thr-141, and Glu-146 each coordinate Ca(2+).

In terms of assembly, homodimer. Interacts with SRI and LCP1.

Its subcellular location is the cytoplasm. The protein localises to the cytoplasmic granule membrane. In terms of biological role, calcium-binding protein that may play a role in the adhesion of neutrophils to fibronectin. May play a role in the formation of focal adhesions. This chain is Grancalcin (Gca), found in Mus musculus (Mouse).